The chain runs to 461 residues: CBL-interacting protein kinase 1 (461 aa).

Residues 19–274 enclose the Protein kinase domain; sequence YEIGRTLGEG…IAGIKEHEWF (256 aa). Residues 25-33 and lysine 48 each bind ATP; that span reads LGEGNFGKV. Aspartate 142 functions as the Proton acceptor in the catalytic mechanism. An activation loop region spans residues 160 to 189; that stretch reads DFGLSALPQHLGNDGLLHTTCGSPNYIAPE. The region spanning 308–332 is the NAF domain; the sequence is EKPTHINAFQLIGMASALDLSGFFE. The PPI stretch occupies residues 338–367; that stretch reads QRKIRFTSTHSPKDLFDKIENVVTEMGFQV.

It belongs to the protein kinase superfamily. CAMK Ser/Thr protein kinase family. SNF1 subfamily. Requires Mn(2+) as cofactor.

The enzyme catalyses L-seryl-[protein] + ATP = O-phospho-L-seryl-[protein] + ADP + H(+). It catalyses the reaction L-threonyl-[protein] + ATP = O-phospho-L-threonyl-[protein] + ADP + H(+). Functionally, CIPK serine-threonine protein kinases interact with CBL proteins. Binding of a CBL protein to the regulatory NAF domain of CIPK protein lead to the activation of the kinase in a calcium-dependent manner. This is CBL-interacting protein kinase 1 (CIPK1) from Oryza sativa subsp. japonica (Rice).